The sequence spans 453 residues: MAAVVLENGVLSRKLSDFGQETSYIEDNSNQNGAVSLIFSLKEEVGALAKVLRLFEENEINLTHIESRPSRLNKDEYEFFTYLDKRSKPVLGSIIKSLRNDIGATVHELSRDKEKNTVPWFPRTIQELDRFANQILSYGAELDADHPGFKDPVYRARRKQFADIAYNYRHGQPIPRVEYTEEERKTWGTVFRTLKALYKTHACYEHNHIFPLLEKYCGFREDNIPQLEDVSQFLQTCTGFRLRPVAGLLSSRDFLGGLAFRVFHCTQYIRHGSKPMYTPEPDICHELLGHVPLFSDRSFAQFSQEIGLASLGAPDEYIEKLATIYWFTVEFGLCKEGDSIKAYGAGLLSSFGELQYCLSDKPKLLPLELEKTACQEYTVTEFQPLYYVAESFNDAKEKVRTFAATIPRPFSVRYDPYTQRVEVLDNTQQLKILADSINSEVGILCHALQKIKS.

A2 bears the N-acetylalanine mark. S16 is modified (phosphoserine). The region spanning 36–114 is the ACT domain; it reads SLIFSLKEEV…TVHELSRDKE (79 aa). Fe cation-binding residues include H285, H290, and E330.

The protein belongs to the biopterin-dependent aromatic amino acid hydroxylase family. Homodimer and homotetramer. The cofactor is Fe(2+). Phosphorylation at Ser-16 increases basal activity and facilitates activation by the substrate phenylalanine.

It carries out the reaction (6R)-L-erythro-5,6,7,8-tetrahydrobiopterin + L-phenylalanine + O2 = (4aS,6R)-4a-hydroxy-L-erythro-5,6,7,8-tetrahydrobiopterin + L-tyrosine. The protein operates within amino-acid degradation; L-phenylalanine degradation; acetoacetate and fumarate from L-phenylalanine: step 1/6. With respect to regulation, N-terminal region of PAH is thought to contain allosteric binding sites for phenylalanine and to constitute an 'inhibitory' domain that regulates the activity of a catalytic domain in the C-terminal portion of the molecule. In terms of biological role, catalyzes the hydroxylation of L-phenylalanine to L-tyrosine. The protein is Phenylalanine-4-hydroxylase (Pah) of Mus musculus (Mouse).